We begin with the raw amino-acid sequence, 3574 residues long: Chromatin structure-remodeling complex protein SYD (3574 aa).

3 disordered regions span residues 76-105 (SCLPHPGGTQTEDSGSAHLAGSSQAVGVSN), 123-211 (TSGR…KIDD), and 328-372 (DPKG…TERS). 2 stretches are compositionally biased toward polar residues: residues 124–148 (SGRQLGGSNSASQTFYQGSGTQSNR) and 155–168 (PSNLDSTSGISQPH). Residues 169-181 (NRSETMNQRDVKS) are compositionally biased toward basic and acidic residues. Polar residues predominate over residues 194 to 204 (WDQNMDNSQIF). Positions 358–372 (RLDEMDFSSKETERS) are enriched in basic and acidic residues. An HSA domain is found at 573-647 (QKMKEERQRR…QREKINLLKI (75 aa)). Residues 766–933 (VSLYNNHLNG…WALLNFLLPN (168 aa)) form the Helicase ATP-binding domain. 779 to 786 (DEMGLGKT) contacts ATP. The DEAH box motif lies at 884–887 (DEGH). The 147-residue stretch at 1077-1223 (MLDRMLPKLK…KLGVANQSIT (147 aa)) folds into the Helicase C-terminal domain. The short motif at 1266 to 1273 (ARRESEID) is the Nuclear localization signal element. Disordered regions lie at residues 1342–1472 (KRKD…VSRT), 1500–1575 (HPTS…SDAE), 1588–1637 (IVSR…SGSH), 1690–1811 (GPVQ…QIEV), 1830–1868 (QPHFSQSVAPDIHSSGSLSQEIRRDTSGTGGSARKQTAD), 2040–2068 (SSLSYVRSEPTASASTTAEPLPTDKLEKN), 2089–2115 (SSEEQTNVNSKIETNSEELQASRTDEV), 2143–2162 (SSMLEPDELPNAGQKGHSSI), 2179–2220 (LDDK…QMED), 2235–2338 (EEKE…DTND), 2350–2451 (EEKE…HMED), 2517–2538 (FESETHARTDSGGIDRGNEVSE), 2684–2703 (SEEIQSPSILPDDVPGQPDD), 2718–2759 (IDIG…RDSR), 2865–2884 (DTEKSKEPGTESADVSLHQL), 3017–3045 (EGTDFSSSLPKTEEENAKSQLADTEPSSS), 3189–3208 (NADSQLANIEPSSSPSVVEK), 3316–3337 (VDDSTGCSSEPQVQLPPSAEPM), and 3512–3574 (TEDT…NEDV). A compositionally biased stretch (basic and acidic residues) spans 1362–1371 (AREVRSYEEK). Polar residues-rich tracts occupy residues 1399-1426 (SLANDTSNIPVENSSDTLLPTSPTQAIT) and 1500-1511 (HPTSSLALTSPD). Basic residues predominate over residues 1532 to 1546 (GRGRGRSRGRGAGRG). 2 stretches are compositionally biased toward polar residues: residues 1555–1571 (GSNSSITQRTETATSLA) and 1597–1614 (EGSTSNPDQVSPVHSATT). The span at 1617–1627 (RSDKAADKDLD) shows a compositional bias: basic and acidic residues. 6 stretches are compositionally biased toward polar residues: residues 1690–1699 (GPVQNQNAVS), 1706–1752 (KSPS…STVE), 1796–1806 (DASSARSTGLT), 1832–1849 (HFSQSVAPDIHSSGSLSQ), 2040–2057 (SSLSYVRSEPTASASTTA), and 2090–2110 (SEEQTNVNSKIETNSEELQAS). Residues 2248 to 2260 (DDADTEQDPEESV) are compositionally biased toward acidic residues. Over residues 2438–2451 (DRPKDGTADTHMED) the composition is skewed to basic and acidic residues. The span at 2718 to 2735 (IDIGITSGKTCQPSSSTQ) shows a compositional bias: polar residues. 2 stretches are compositionally biased toward polar residues: residues 3034 to 3045 (KSQLADTEPSSS) and 3191 to 3204 (DSQLANIEPSSSPS). A compositionally biased stretch (basic and acidic residues) spans 3523 to 3538 (KTEEKDAENPSDRLDG).

This sequence belongs to the SNF2/RAD54 helicase family. Interacts with LFY. Binds to BARD1/ROW1. Phosphorylated. In terms of tissue distribution, mostly expressed in rapidly dividing cells in the vegetative, inflorescence, and root meristems, as well as in young leaf and flower primordia. Isoform 1 is predominantly found in seedlings whereas isoform 2 is present in both seedlings and inflorescences (at protein level).

Its subcellular location is the cytoplasm. It is found in the nucleus. Catalytic component of the chromatin structure-remodeling complex (RSC), which is involved in transcription regulation and nucleosome positioning. Controls stem cell fate via the transcription regulation of WUS in the shoot apical meristem, by modulating its promoter. LFY-dependent repressor of the meristem identity switch from vegetative to reproductive development probably by modulating chromatin state. Involved in the regulation of floral homeotic gene expression in response to environmental stimuli. Required for carpel and ovule development, and for cotyledon separation via the regulation of CUC2 transcription. Regulates the promoters of several genes downstream of the jasmonate (JA) and ethylene (ET) signaling pathways. Required for resistance against the necrotrophic pathogen B.cinerea but not the biotrophic pathogen P.syringae. The protein is Chromatin structure-remodeling complex protein SYD (SYD) of Arabidopsis thaliana (Mouse-ear cress).